The sequence spans 274 residues: Large ribosomal subunit protein uL2 (274 aa).

Disordered stretches follow at residues 35–55 (FGKKSSGGRNNHGRITTRHRG) and 224–274 (AMNP…KLKG). The span at 45 to 55 (NHGRITTRHRG) shows a compositional bias: basic residues. Positions 263 to 274 (KSSDKYIKKLKG) are enriched in basic and acidic residues.

This sequence belongs to the universal ribosomal protein uL2 family. As to quaternary structure, part of the 50S ribosomal subunit. Forms a bridge to the 30S subunit in the 70S ribosome.

One of the primary rRNA binding proteins. Required for association of the 30S and 50S subunits to form the 70S ribosome, for tRNA binding and peptide bond formation. It has been suggested to have peptidyltransferase activity; this is somewhat controversial. Makes several contacts with the 16S rRNA in the 70S ribosome. In Wolbachia pipientis subsp. Culex pipiens (strain wPip), this protein is Large ribosomal subunit protein uL2.